A 415-amino-acid polypeptide reads, in one-letter code: Putative competence-damage inducible protein (415 aa).

The protein belongs to the CinA family.

This Limosilactobacillus reuteri (strain DSM 20016) (Lactobacillus reuteri) protein is Putative competence-damage inducible protein.